A 61-amino-acid chain; its full sequence is Large ribosomal subunit protein bL32 (61 aa).

Residues 1–16 (MAVPRRKTSPSRRGMR) are compositionally biased toward basic residues. Positions 1–61 (MAVPRRKTSP…RQVLKVKKED (61 aa)) are disordered. Over residues 17–44 (RSADALKKPTYVEDKDSGELRRPHHLDL) the composition is skewed to basic and acidic residues.

It belongs to the bacterial ribosomal protein bL32 family.

The sequence is that of Large ribosomal subunit protein bL32 from Afipia carboxidovorans (strain ATCC 49405 / DSM 1227 / KCTC 32145 / OM5) (Oligotropha carboxidovorans).